The sequence spans 421 residues: UPF0415 protein C7orf25 homolog (421 aa).

This sequence belongs to the UPF0415 family.

The protein is UPF0415 protein C7orf25 homolog of Rattus norvegicus (Rat).